Reading from the N-terminus, the 334-residue chain is Glycerol-1-phosphate dehydrogenase [NAD(P)+] (334 aa).

NAD(+)-binding positions include 77 to 81 (GRPID) and 99 to 102 (TTAS). D104 contacts substrate. NAD(+) is bound at residue S108. Residue D147 participates in substrate binding. Zn(2+) contacts are provided by D147 and H225. H229 contributes to the substrate binding site. H246 contacts Zn(2+).

This sequence belongs to the glycerol-1-phosphate dehydrogenase family. Zn(2+) serves as cofactor.

It is found in the cytoplasm. It carries out the reaction sn-glycerol 1-phosphate + NAD(+) = dihydroxyacetone phosphate + NADH + H(+). The enzyme catalyses sn-glycerol 1-phosphate + NADP(+) = dihydroxyacetone phosphate + NADPH + H(+). The protein operates within membrane lipid metabolism; glycerophospholipid metabolism. Its function is as follows. Catalyzes the NAD(P)H-dependent reduction of dihydroxyacetonephosphate (DHAP or glycerone phosphate) to glycerol 1-phosphate (G1P). The G1P thus generated is used as the glycerophosphate backbone of phospholipids in the cellular membranes of Archaea. This is Glycerol-1-phosphate dehydrogenase [NAD(P)+] from Methanococcus maripaludis (strain C6 / ATCC BAA-1332).